We begin with the raw amino-acid sequence, 644 residues long: MSGAGLELDGVWRRFPSGEDEVAVLKNVTLSIAPGEMVAIVGASGSGKSTLMNILGCLDQPSVGRYRVAGQDAGCLDGDQLAALRRGHFGFIFQRYHLLPHLSALDNVAMPAVYAGMALHQRRERARALLARLGLAGKEHHRPGQLSGGQQQRVSIARALMNGGRIILADEPTGALDSHSGEEVMRILKELNAAGHTVIIVTHDPAIAAQTERVIEIRDGEILRDSGAPAREAASQATEAQPDGGPLLRERLAEAFKMAMLAMSANRLRTALTMLGIVIGIASVVSVIAIGEGSRDYVLKGIREMGTQTITVFRGKDWGDDKADGVRTFLPGDVAALEGEGYVDSVTPETAQAQRIRYRNVDVNASVIGVGRDFFRVQGMKLAEGQSFSRDDIHFQRQVVVLDKNSRRKLFGDGEAVGRVILVGMVPATVIGVVAQRDRGFGGNSLQMWMPYSTAASRLFGQQHFDRFVIRVKDGQPTKLAEKAIGALLTQRHGGKDFFTYNMDEILKTVESSSRALSLLLALVAVISLVVGGIGVMNIMLVSVTERTREIGIRMAVGARQGDVLQQFLTEAVLVCLVGGAIGVALSYGVSFVFSLFVTEWKMSLSPPVIALAVACSSLIGVLFGFLPARNAAKLNPIDALARE.

Residues 6–244 form the ABC transporter domain; sequence LELDGVWRRF…SQATEAQPDG (239 aa). 42–49 lines the ATP pocket; it reads GASGSGKS. 5 helical membrane-spanning segments follow: residues 271–291, 415–435, 517–537, 574–594, and 609–629; these read ALTMLGIVIGIASVVSVIAIG, EAVGRVILVGMVPATVIGVVA, LSLLLALVAVISLVVGGIGVM, LVCLVGGAIGVALSYGVSFVF, and VIALAVACSSLIGVLFGFLPA.

Belongs to the ABC transporter superfamily. Macrolide exporter (TC 3.A.1.122) family. As to quaternary structure, homodimer.

It is found in the cell inner membrane. Non-canonical ABC transporter that contains transmembrane domains (TMD), which form a pore in the inner membrane, and an ATP-binding domain (NBD), which is responsible for energy generation. Confers resistance against macrolides. The chain is Macrolide export ATP-binding/permease protein MacB from Chromobacterium violaceum (strain ATCC 12472 / DSM 30191 / JCM 1249 / CCUG 213 / NBRC 12614 / NCIMB 9131 / NCTC 9757 / MK).